The chain runs to 284 residues: Pantothenate synthetase (284 aa).

Residue methionine 30–histidine 37 coordinates ATP. Histidine 37 (proton donor) is an active-site residue. (R)-pantoate is bound at residue glutamine 61. Residue glutamine 61 coordinates beta-alanine. Glycine 149–aspartate 152 serves as a coordination point for ATP. Glutamine 155 contributes to the (R)-pantoate binding site. Residues isoleucine 178 and leucine 186 to arginine 189 contribute to the ATP site.

Belongs to the pantothenate synthetase family. Homodimer.

It is found in the cytoplasm. The catalysed reaction is (R)-pantoate + beta-alanine + ATP = (R)-pantothenate + AMP + diphosphate + H(+). The protein operates within cofactor biosynthesis; (R)-pantothenate biosynthesis; (R)-pantothenate from (R)-pantoate and beta-alanine: step 1/1. In terms of biological role, catalyzes the condensation of pantoate with beta-alanine in an ATP-dependent reaction via a pantoyl-adenylate intermediate. This is Pantothenate synthetase from Salmonella typhi.